The sequence spans 1287 residues: Vacuolating cytotoxin autotransporter (1287 aa).

The first 33 residues, 1-33 (MEIQQTHRKINRPLVSLALVGALVSITPQQSHA), serve as a signal peptide directing secretion. Positions 326–381 (PPEGGYKDKPNNTPSQSGAKNDKQESSQNNSNTQVINPPNSTQKTEVQPTQVIDGP) are disordered. Over residues 351–376 (SSQNNSNTQVINPPNSTQKTEVQPTQ) the composition is skewed to polar residues. The Autotransporter domain maps to 1014-1287 (KYEKPTNVWA…ASNLGMRYSF (274 aa)).

It is found in the periplasm. Its subcellular location is the secreted. The protein resides in the cell surface. The protein localises to the cell outer membrane. Induces vacuolation of eukaryotic cells. Causes ulceration and gastric lesions. The chain is Vacuolating cytotoxin autotransporter (vacA) from Helicobacter pylori (Campylobacter pylori).